The chain runs to 195 residues: ATP-dependent Clp protease proteolytic subunit 2 (195 aa).

Residue serine 98 is the Nucleophile of the active site. The active site involves histidine 123.

Belongs to the peptidase S14 family. Fourteen ClpP subunits assemble into 2 heptameric rings which stack back to back to give a disk-like structure with a central cavity, resembling the structure of eukaryotic proteasomes.

It is found in the cytoplasm. It carries out the reaction Hydrolysis of proteins to small peptides in the presence of ATP and magnesium. alpha-casein is the usual test substrate. In the absence of ATP, only oligopeptides shorter than five residues are hydrolyzed (such as succinyl-Leu-Tyr-|-NHMec, and Leu-Tyr-Leu-|-Tyr-Trp, in which cleavage of the -Tyr-|-Leu- and -Tyr-|-Trp bonds also occurs).. Functionally, cleaves peptides in various proteins in a process that requires ATP hydrolysis. Has a chymotrypsin-like activity. Plays a major role in the degradation of misfolded proteins. The chain is ATP-dependent Clp protease proteolytic subunit 2 from Rhodopirellula baltica (strain DSM 10527 / NCIMB 13988 / SH1).